Consider the following 145-residue polypeptide: Flagellar assembly factor FliW (145 aa).

Belongs to the FliW family. In terms of assembly, interacts with translational regulator CsrA and flagellin(s).

It is found in the cytoplasm. Functionally, acts as an anti-CsrA protein, binds CsrA and prevents it from repressing translation of its target genes, one of which is flagellin. Binds to flagellin and participates in the assembly of the flagellum. The sequence is that of Flagellar assembly factor FliW from Exiguobacterium sp. (strain ATCC BAA-1283 / AT1b).